Here is a 201-residue protein sequence, read N- to C-terminus: Lipopolysaccharide core heptose(II)-phosphate phosphatase (201 aa).

Residues 1–35 (MLAFTLRFIKNKRYFAILAGALVIIAGLTSQHAWS) form the signal peptide.

It belongs to the phosphoglycerate mutase family. Ais subfamily.

The protein localises to the periplasm. It functions in the pathway bacterial outer membrane biogenesis; lipopolysaccharide metabolism. Functionally, catalyzes the dephosphorylation of heptose(II) of the outer membrane lipopolysaccharide core. The chain is Lipopolysaccharide core heptose(II)-phosphate phosphatase from Salmonella enteritidis PT4 (strain P125109).